The chain runs to 141 residues: Large ribosomal subunit protein uL11 (141 aa).

This sequence belongs to the universal ribosomal protein uL11 family. Part of the ribosomal stalk of the 50S ribosomal subunit. Interacts with L10 and the large rRNA to form the base of the stalk. L10 forms an elongated spine to which L12 dimers bind in a sequential fashion forming a multimeric L10(L12)X complex. Post-translationally, one or more lysine residues are methylated.

Forms part of the ribosomal stalk which helps the ribosome interact with GTP-bound translation factors. The chain is Large ribosomal subunit protein uL11 from Limosilactobacillus reuteri (strain DSM 20016) (Lactobacillus reuteri).